The primary structure comprises 71 residues: Exodeoxyribonuclease 7 small subunit (71 aa).

It belongs to the XseB family. As to quaternary structure, heterooligomer composed of large and small subunits.

The protein resides in the cytoplasm. It carries out the reaction Exonucleolytic cleavage in either 5'- to 3'- or 3'- to 5'-direction to yield nucleoside 5'-phosphates.. Bidirectionally degrades single-stranded DNA into large acid-insoluble oligonucleotides, which are then degraded further into small acid-soluble oligonucleotides. The protein is Exodeoxyribonuclease 7 small subunit of Endomicrobium trichonymphae.